The sequence spans 138 residues: Phosphoribosyl-AMP cyclohydrolase (138 aa).

Asp84 contacts Mg(2+). Cys85 lines the Zn(2+) pocket. Asp86 and Asp88 together coordinate Mg(2+). The Zn(2+) site is built by Cys102 and Cys109.

The protein belongs to the PRA-CH family. In terms of assembly, homodimer. It depends on Mg(2+) as a cofactor. The cofactor is Zn(2+).

Its subcellular location is the cytoplasm. It catalyses the reaction 1-(5-phospho-beta-D-ribosyl)-5'-AMP + H2O = 1-(5-phospho-beta-D-ribosyl)-5-[(5-phospho-beta-D-ribosylamino)methylideneamino]imidazole-4-carboxamide. It participates in amino-acid biosynthesis; L-histidine biosynthesis; L-histidine from 5-phospho-alpha-D-ribose 1-diphosphate: step 3/9. Functionally, catalyzes the hydrolysis of the adenine ring of phosphoribosyl-AMP. The sequence is that of Phosphoribosyl-AMP cyclohydrolase from Burkholderia lata (strain ATCC 17760 / DSM 23089 / LMG 22485 / NCIMB 9086 / R18194 / 383).